The following is a 192-amino-acid chain: Holliday junction branch migration complex subunit RuvA (192 aa).

The interval Met1–Leu61 is domain I. The interval Ser62–Thr137 is domain II. Residues Thr137–Ala140 form a flexible linker region. The segment at Asp141–Lys192 is domain III.

This sequence belongs to the RuvA family. Homotetramer. Forms an RuvA(8)-RuvB(12)-Holliday junction (HJ) complex. HJ DNA is sandwiched between 2 RuvA tetramers; dsDNA enters through RuvA and exits via RuvB. An RuvB hexamer assembles on each DNA strand where it exits the tetramer. Each RuvB hexamer is contacted by two RuvA subunits (via domain III) on 2 adjacent RuvB subunits; this complex drives branch migration. In the full resolvosome a probable DNA-RuvA(4)-RuvB(12)-RuvC(2) complex forms which resolves the HJ.

The protein resides in the cytoplasm. Functionally, the RuvA-RuvB-RuvC complex processes Holliday junction (HJ) DNA during genetic recombination and DNA repair, while the RuvA-RuvB complex plays an important role in the rescue of blocked DNA replication forks via replication fork reversal (RFR). RuvA specifically binds to HJ cruciform DNA, conferring on it an open structure. The RuvB hexamer acts as an ATP-dependent pump, pulling dsDNA into and through the RuvAB complex. HJ branch migration allows RuvC to scan DNA until it finds its consensus sequence, where it cleaves and resolves the cruciform DNA. The protein is Holliday junction branch migration complex subunit RuvA of Lactobacillus johnsonii (strain CNCM I-12250 / La1 / NCC 533).